We begin with the raw amino-acid sequence, 288 residues long: ATP synthase gamma chain (288 aa).

Belongs to the ATPase gamma chain family. In terms of assembly, F-type ATPases have 2 components, CF(1) - the catalytic core - and CF(0) - the membrane proton channel. CF(1) has five subunits: alpha(3), beta(3), gamma(1), delta(1), epsilon(1). CF(0) has three main subunits: a, b and c.

The protein localises to the cell inner membrane. In terms of biological role, produces ATP from ADP in the presence of a proton gradient across the membrane. The gamma chain is believed to be important in regulating ATPase activity and the flow of protons through the CF(0) complex. This Actinobacillus pleuropneumoniae serotype 5b (strain L20) protein is ATP synthase gamma chain.